The following is a 206-amino-acid chain: Protein-methionine-sulfoxide reductase heme-binding subunit MsrQ (206 aa).

6 helical membrane-spanning segments follow: residues 14–34, 45–65, 82–102, 118–138, 149–169, and 179–199; these read IKPLLFVAGLLPFARWFWLGA, FLTRSSGTWTLVCLLVTLAIT, MCGLFAFFYGSLHFLAWVWWD, PFITVGFAAFVLMAALAATST, WQVLHRAVYAIGLLAILHFWW, and QPLLYGSVLALLLGWRVAAWW.

It belongs to the MsrQ family. As to quaternary structure, heterodimer of a catalytic subunit (MsrP) and a heme-binding subunit (MsrQ). The cofactor is FMN. Heme b is required as a cofactor.

It is found in the cell inner membrane. Functionally, part of the MsrPQ system that repairs oxidized periplasmic proteins containing methionine sulfoxide residues (Met-O), using respiratory chain electrons. Thus protects these proteins from oxidative-stress damage caused by reactive species of oxygen and chlorine generated by the host defense mechanisms. MsrPQ is essential for the maintenance of envelope integrity under bleach stress, rescuing a wide series of structurally unrelated periplasmic proteins from methionine oxidation. MsrQ provides electrons for reduction to the reductase catalytic subunit MsrP, using the quinone pool of the respiratory chain. The chain is Protein-methionine-sulfoxide reductase heme-binding subunit MsrQ from Bordetella bronchiseptica (strain ATCC BAA-588 / NCTC 13252 / RB50) (Alcaligenes bronchisepticus).